A 108-amino-acid polypeptide reads, in one-letter code: Nucleoid-associated protein GK0018 (108 aa).

The disordered stretch occupies residues 1 to 32 (MMRGGMGNMQKMLKQMQKMQKEMQKAQEELAE). Low complexity predominate over residues 9–18 (MQKMLKQMQK). Positions 19 to 32 (MQKEMQKAQEELAE) are enriched in basic and acidic residues.

This sequence belongs to the YbaB/EbfC family. As to quaternary structure, homodimer.

It localises to the cytoplasm. It is found in the nucleoid. Binds to DNA and alters its conformation. May be involved in regulation of gene expression, nucleoid organization and DNA protection. This chain is Nucleoid-associated protein GK0018, found in Geobacillus kaustophilus (strain HTA426).